We begin with the raw amino-acid sequence, 449 residues long: Putative transporter C83.11 (449 aa).

9 helical membrane passes run 7–27 (LSHI…LWYI), 47–67 (VTLT…CLLF), 84–104 (VLYT…FGSL), 109–129 (IPVS…VLAY), 136–156 (VYSA…TLAC), 164–184 (IVGL…NIFG), 205–225 (LNLL…VWLY), 255–275 (ILAF…ASLI), and 278–298 (IFVI…TQGS). A phosphoserine mark is found at serine 348 and serine 352. A Phosphotyrosine modification is found at tyrosine 355. Positions 382 to 415 (NSVYSNEGVTSSVSGNATPASVRQSTQNDFSNSN) are enriched in polar residues. A disordered region spans residues 382 to 416 (NSVYSNEGVTSSVSGNATPASVRQSTQNDFSNSNI).

This sequence belongs to the TPT transporter family.

It localises to the membrane. The sequence is that of Putative transporter C83.11 from Schizosaccharomyces pombe (strain 972 / ATCC 24843) (Fission yeast).